The following is a 192-amino-acid chain: N-terminal acetyltransferase A complex catalytic subunit NAA10 (192 aa).

An N-acetyltransferase domain is found at 2-152 (VCIRRATVDD…DAYDMRKNLK (151 aa)).

It belongs to the acetyltransferase family. ARD1 subfamily. As to quaternary structure, part of the NatA complex. Interacts with NAA15. In terms of tissue distribution, expressed in leaves, roots, shoots and flowers.

The catalysed reaction is N-terminal glycyl-[protein] + acetyl-CoA = N-terminal N(alpha)-acetylglycyl-[protein] + CoA + H(+). It carries out the reaction N-terminal L-alanyl-[protein] + acetyl-CoA = N-terminal N(alpha)-acetyl-L-alanyl-[protein] + CoA + H(+). The enzyme catalyses N-terminal L-seryl-[protein] + acetyl-CoA = N-terminal N(alpha)-acetyl-L-seryl-[protein] + CoA + H(+). It catalyses the reaction N-terminal L-valyl-[protein] + acetyl-CoA = N-terminal N(alpha)-acetyl-L-valyl-[protein] + CoA + H(+). The catalysed reaction is N-terminal L-cysteinyl-[protein] + acetyl-CoA = N-terminal N(alpha)-acetyl-L-cysteinyl-[protein] + CoA + H(+). It carries out the reaction N-terminal L-threonyl-[protein] + acetyl-CoA = N-terminal N(alpha)-acetyl-L-threonyl-[protein] + CoA + H(+). Its function is as follows. Catalytic subunit of the NatA N-alpha-acetyltransferase complex. Required for male gametocyte development, embryogenesis, suspensor development and the formation of the quiescent center (QC) in the root meristem. Involved in plant immunity through the regulation of SNC1 and RPM1 stability. This is N-terminal acetyltransferase A complex catalytic subunit NAA10 from Arabidopsis thaliana (Mouse-ear cress).